Consider the following 444-residue polypeptide: N-succinylarginine dihydrolase (444 aa).

Residues 19-28, N110, and 137-138 contribute to the substrate site; these read AGLSFGNVAS and HR. E174 is an active-site residue. R214 is a binding site for substrate. The active site involves H250. The substrate site is built by D252 and N362. Residue C368 is the Nucleophile of the active site.

The protein belongs to the succinylarginine dihydrolase family. Homodimer.

It carries out the reaction N(2)-succinyl-L-arginine + 2 H2O + 2 H(+) = N(2)-succinyl-L-ornithine + 2 NH4(+) + CO2. It participates in amino-acid degradation; L-arginine degradation via AST pathway; L-glutamate and succinate from L-arginine: step 2/5. In terms of biological role, catalyzes the hydrolysis of N(2)-succinylarginine into N(2)-succinylornithine, ammonia and CO(2). In Shewanella putrefaciens (strain CN-32 / ATCC BAA-453), this protein is N-succinylarginine dihydrolase.